Reading from the N-terminus, the 72-residue chain is Cell division protein ZapB (72 aa).

Residues 1-71 (MSLEILDQLE…IRSLLGKFDN (71 aa)) adopt a coiled-coil conformation.

The protein belongs to the ZapB family. As to quaternary structure, homodimer. The ends of the coiled-coil dimer bind to each other, forming polymers. Interacts with FtsZ.

The protein resides in the cytoplasm. In terms of biological role, non-essential, abundant cell division factor that is required for proper Z-ring formation. It is recruited early to the divisome by direct interaction with FtsZ, stimulating Z-ring assembly and thereby promoting cell division earlier in the cell cycle. Its recruitment to the Z-ring requires functional FtsA or ZipA. The sequence is that of Cell division protein ZapB from Haemophilus influenzae (strain 86-028NP).